Consider the following 436-residue polypeptide: GTPase Der (436 aa).

EngA-type G domains are found at residues 3–168 (PLVA…EEKS) and 177–352 (IRLA…EQRS). GTP-binding positions include 9-16 (GRPNVGKS), 56-60 (DTGGY), 120-123 (NKVE), 183-190 (GRPNVGKS), 230-234 (DTAGL), and 295-298 (NKWD). Positions 353-436 (QQITTSDLNR…VPFSLRFMQK (84 aa)) constitute a KH-like domain.

This sequence belongs to the TRAFAC class TrmE-Era-EngA-EngB-Septin-like GTPase superfamily. EngA (Der) GTPase family. In terms of assembly, associates with the 50S ribosomal subunit.

In terms of biological role, GTPase that plays an essential role in the late steps of ribosome biogenesis. This is GTPase Der from Prosthecochloris aestuarii (strain DSM 271 / SK 413).